A 138-amino-acid chain; its full sequence is Venom allergen 2 (138 aa).

The first 19 residues, 1–19 (MKSFVLATCLLGFAQIIYA), serve as a signal peptide directing secretion. Cystine bridges form between cysteine 34–cysteine 57, cysteine 81–cysteine 94, and cysteine 101–cysteine 122.

The protein belongs to the ant venom allergen 2/4 family. In terms of assembly, homodimer; disulfide-linked. In terms of tissue distribution, expressed by the venom gland.

The protein localises to the secreted. The polypeptide is Venom allergen 2 (Solenopsis invicta (Red imported fire ant)).